Consider the following 217-residue polypeptide: Ribosomal RNA small subunit methyltransferase G (217 aa).

Residues glycine 79, leucine 84, 130–131, and arginine 145 contribute to the S-adenosyl-L-methionine site; that span reads IE.

It belongs to the methyltransferase superfamily. RNA methyltransferase RsmG family.

It localises to the cytoplasm. The catalysed reaction is guanosine(527) in 16S rRNA + S-adenosyl-L-methionine = N(7)-methylguanosine(527) in 16S rRNA + S-adenosyl-L-homocysteine. Specifically methylates the N7 position of guanine in position 527 of 16S rRNA. This chain is Ribosomal RNA small subunit methyltransferase G, found in Hahella chejuensis (strain KCTC 2396).